Reading from the N-terminus, the 804-residue chain is Tubulin polyglutamylase TTLL13 (804 aa).

The tract at residues 1 to 41 is disordered; it reads MEPNNCKTSESEEDDIEEEESEEECVREESTTPNSTQQALR. Positions 4–30 form a coiled coil; the sequence is NNCKTSESEEDDIEEEESEEECVREES. Over residues 11 to 26 the composition is skewed to acidic residues; the sequence is SEEDDIEEEESEEECV. The TTL domain occupies 85–430; it reads RRPLAINLTN…RGCDKKKVIE (346 aa). ATP contacts are provided by residues lysine 202, 208 to 209, 230 to 233, and 243 to 245; these read QG, QQYI, and KFD. A protein is bound at residue glutamine 208. Arginine 269 provides a ligand contact to L-glutamate. 291–292 contacts ATP; sequence TN. L-glutamate-binding residues include tyrosine 293 and lysine 311. Mg(2+)-binding residues include aspartate 376, glutamate 389, and asparagine 391. Histidine 392 contacts a protein. The segment at 401–482 is c-MTBD region; the sequence is RLDREVKDAL…LGGYRRIYPG (82 aa). Lysine 407 is a binding site for L-glutamate. 2 coiled-coil regions span residues 504 to 541 and 585 to 609; these read ASKA…KEQN and QDIV…IRSL. Residues 519–556 form a disordered region; sequence IRLKQEQQENPGTKKRKENKEQNQGESAGEKSRSRTAT. The segment covering 536–551 has biased composition (basic and acidic residues); that stretch reads ENKEQNQGESAGEKSR.

The protein belongs to the tubulin--tyrosine ligase family. It depends on Mg(2+) as a cofactor. In terms of tissue distribution, highly expressed in heart and testis. Expressed in brain, kidney, liver, lung, muscle and trachea. In the brain, expressed in ependymal cilia, cortex, corpus callosum and striatum.

It catalyses the reaction (L-glutamyl)(n)-gamma-L-glutamyl-L-glutamyl-[protein] + L-glutamate + ATP = (L-glutamyl)(n+1)-gamma-L-glutamyl-L-glutamyl-[protein] + ADP + phosphate + H(+). Polyglutamylase which modifies tubulin, generating polyglutamate side chains of variable lengths on the gamma-carboxyl group of specific glutamate residues within the C-terminal tail of tubulin. Mediates ATP-dependent polyglutamate side-chain elongation of the polyglutamylation reaction but not the initiation step. Preferentially modifies the alpha-tubulin tail over a beta-tail. The sequence is that of Tubulin polyglutamylase TTLL13 from Mus musculus (Mouse).